The following is a 215-amino-acid chain: Cytochrome b6 (215 aa).

Residues isoleucine 32–phenylalanine 52 traverse the membrane as a helical segment. Cysteine 35 contributes to the heme c binding site. 2 residues coordinate heme b: histidine 86 and histidine 100. Helical transmembrane passes span alanine 90–phenylalanine 110, leucine 116–tyrosine 136, and leucine 186–isoleucine 206. Histidine 187 and histidine 202 together coordinate heme b.

Belongs to the cytochrome b family. PetB subfamily. In terms of assembly, the 4 large subunits of the cytochrome b6-f complex are cytochrome b6, subunit IV (17 kDa polypeptide, PetD), cytochrome f and the Rieske protein, while the 4 small subunits are PetG, PetL, PetM and PetN. The complex functions as a dimer. Heme b serves as cofactor. Requires heme c as cofactor.

The protein resides in the plastid. Its subcellular location is the chloroplast thylakoid membrane. Functionally, component of the cytochrome b6-f complex, which mediates electron transfer between photosystem II (PSII) and photosystem I (PSI), cyclic electron flow around PSI, and state transitions. This is Cytochrome b6 from Daucus carota (Wild carrot).